Here is a 369-residue protein sequence, read N- to C-terminus: Cytokine receptor common subunit gamma (369 aa).

A signal peptide spans 1 to 22; the sequence is MLKPSLPFTSLLFLQLPLLGVG. Residues 23–262 are Extracellular-facing; the sequence is LNTTILTPNG…ENPFLFALEA (240 aa). N-linked (GlcNAc...) asparagine glycans are attached at residues Asn-24, Asn-71, Asn-75, and Asn-84. An intrachain disulfide couples Cys-62 to Cys-72. Cys-102 and Cys-115 are oxidised to a cystine. A Fibronectin type-III domain is found at 156–253; that stretch reads APENLTLHKL…IHWGSNTSKE (98 aa). Asn-159 carries an N-linked (GlcNAc...) asparagine glycan. A disulfide bridge links Cys-182 with Cys-231. The WSXWS motif signature appears at 237 to 241; the sequence is WSEWS. An N-linked (GlcNAc...) asparagine glycan is attached at Asn-249. A helical membrane pass occupies residues 263–283; sequence VVISVGSMGLIISLLCVYFWL. Residues 284-369 are Cytoplasmic-facing; the sequence is ERTMPRIPTL…PPCYTLKPET (86 aa). The Box 1 motif motif lies at 286–294; the sequence is TMPRIPTLK. Thr-292 is modified (phosphothreonine).

The protein belongs to the type I cytokine receptor family. Type 5 subfamily. As to quaternary structure, the gamma subunit is common to the IL2, IL4, IL7, IL15, IL21 and probably also the IL13 receptors. Interacts with SHB upon interleukin stimulation. Interacts with IL9. (Microbial infection) Interacts with HTLV-1 accessory protein p12I.

The protein resides in the cell membrane. It is found in the cell surface. In terms of biological role, common subunit for the receptors for a variety of interleukins. Probably in association with IL15RA, involved in the stimulation of neutrophil phagocytosis by IL15. The sequence is that of Cytokine receptor common subunit gamma (IL2RG) from Homo sapiens (Human).